The sequence spans 561 residues: Urocanate hydratase (561 aa).

NAD(+)-binding positions include Gly52–Gly53, Gln130, Gly176–Gly178, Glu196, Arg201, Asn242–Ala243, Gln263–His267, Tyr273–Leu274, and Tyr322. The active site involves Cys410. Residue Gly492 coordinates NAD(+).

It belongs to the urocanase family. The cofactor is NAD(+).

The protein resides in the cytoplasm. It catalyses the reaction 4-imidazolone-5-propanoate = trans-urocanate + H2O. The protein operates within amino-acid degradation; L-histidine degradation into L-glutamate; N-formimidoyl-L-glutamate from L-histidine: step 2/3. Its function is as follows. Catalyzes the conversion of urocanate to 4-imidazolone-5-propionate. The protein is Urocanate hydratase of Salmonella typhi.